The sequence spans 207 residues: 3-isopropylmalate dehydratase small subunit (207 aa).

The protein belongs to the LeuD family. LeuD type 1 subfamily. Heterodimer of LeuC and LeuD.

It carries out the reaction (2R,3S)-3-isopropylmalate = (2S)-2-isopropylmalate. Its pathway is amino-acid biosynthesis; L-leucine biosynthesis; L-leucine from 3-methyl-2-oxobutanoate: step 2/4. In terms of biological role, catalyzes the isomerization between 2-isopropylmalate and 3-isopropylmalate, via the formation of 2-isopropylmaleate. The sequence is that of 3-isopropylmalate dehydratase small subunit from Acidithiobacillus ferrooxidans (strain ATCC 23270 / DSM 14882 / CIP 104768 / NCIMB 8455) (Ferrobacillus ferrooxidans (strain ATCC 23270)).